Reading from the N-terminus, the 572-residue chain is ATP-dependent lipid A-core flippase (572 aa).

5 helical membrane passes run 14 to 34, 55 to 75, 148 to 168, 249 to 269, and 272 to 292; these read IIPY…VAAL, VFFL…KGVL, IFLL…CFLI, MEII…SEVI, and SATP…YDPV. The 283-residue stretch at 22–304 folds into the ABC transmembrane type-1 domain; that stretch reads FIAMFAMIVV…VSQVNSTIQQ (283 aa). An ABC transporter domain is found at 338–571; that stretch reads IEFHDVSFSY…EGEYQLLYNM (234 aa). 370–377 contacts ATP; it reads GPSGGGKT.

It belongs to the ABC transporter superfamily. Lipid exporter (TC 3.A.1.106) family. As to quaternary structure, homodimer.

It is found in the cell inner membrane. The catalysed reaction is ATP + H2O + lipid A-core oligosaccharideSide 1 = ADP + phosphate + lipid A-core oligosaccharideSide 2.. Involved in lipopolysaccharide (LPS) biosynthesis. Translocates lipid A-core from the inner to the outer leaflet of the inner membrane. Transmembrane domains (TMD) form a pore in the inner membrane and the ATP-binding domain (NBD) is responsible for energy generation. The protein is ATP-dependent lipid A-core flippase of Desulfotalea psychrophila (strain LSv54 / DSM 12343).